Here is a 106-residue protein sequence, read N- to C-terminus: Large ribosomal subunit protein uL24 (106 aa).

It belongs to the universal ribosomal protein uL24 family. As to quaternary structure, part of the 50S ribosomal subunit.

Its function is as follows. One of two assembly initiator proteins, it binds directly to the 5'-end of the 23S rRNA, where it nucleates assembly of the 50S subunit. In terms of biological role, one of the proteins that surrounds the polypeptide exit tunnel on the outside of the subunit. The polypeptide is Large ribosomal subunit protein uL24 (Desulforudis audaxviator (strain MP104C)).